A 483-amino-acid polypeptide reads, in one-letter code: MILPLILVLYLLSTAAYRLWLHPLRNYPGPCWWAVWRVPYLKGTIRGTIVRDIQRLHNQYGPVVRIAPDELSYITPEAAKPIYTSSPEFPKDPMHLPPFHNGAPGILAADYAHHRRYRRLLASAFSEKGLRAQQGMIQSHIDRLMTRLQGNCSSGSLDMTVWFNWATFDIIGDLAFGEPFGCLERMETNPWIASIQGNVKSIPILNALRRYRLDRLIEFLAPPRLLEMRRRNAQFTAEKVDRRLKHATTTRGDLWDSVLADPPDGEPPMSRAEMVSNASAIVLAGSETSATTLSGCLWLLLTNPEYLQQLTERIRARFSTATVIDAQTVTQIQGLQAVLDESLRLYPAVPMQSNRIVPPPGARLAGSWVPGGTSVAVQQFAACRSPTNFHRPDEFIPERWEKEGEFINDRREASQPFSIGPRNCIGRQLALAEMRLILVHLLWHFDIELDRRRMENMDWMAVQGIWILWDKKPLWVVLKNRST.

Cysteine 424 is a binding site for heme.

Belongs to the cytochrome P450 family. It depends on heme as a cofactor.

It functions in the pathway mycotoxin biosynthesis; sterigmatocystin biosynthesis. Cytochrome P450 monooxygenase; part of the gene cluster that mediates the biosynthesis of sterigmatocystin (ST), a polyketide-derived furanocoumarin which is part of the most toxic and carcinogenic compounds among the known mycotoxins. The first step in the biosynthesis of sterigmatocystin is the production of hexanoate by the fatty acid synthase (FAS) units stcJ and stcK. The polyketide backbone is assembled by the non-reducing polyketide synthase stcA by condensation of the starter hexanoyl-CoA and 7 malonyl-CoA extender units followed by cyclization and release of norsolorinic acid. Norsolorinic acid is the first stable intermediate in the biosynthesis of sterigmatocystin and is converted into averantin (AVN) by the ketoreductase stcE which reduces the hexanoate ketone to an alcohol. Averantin is then oxidized into 5'-hydroxyaverantin (HAVN) by the cytochrome P450 monooxygenase stcF. 5'-hydroxyaverantin is further converted to 5'-oxyaverantin (OAVN) by the 5'-hydroxyaverantin dehydrogenase stcG. The next step is the conversion of OAVN into averufin (AVF) which is catalyzed by a yet to be identified enzyme. The cytochrome P450 monooxygenase stcB and the flavin-binding monooxygenase stcW are both required for the conversion of averufin to 1-hydroxyversicolorone. The esterase stcI probably catalyzes the formation of versiconal hemiacetal acetate from 1-hydroxyversicolorone. The oxydoreductase stcN then probably catalyzes the biosynthetic step from versiconal to versicolorin B (VERB). The next step is performed by the versicolorin B desaturase stcL to produce versicolorin A (VERA). The ketoreductase stcU and the cytochrome P450 monooxygenase stcS are involved in the conversion of versicolorin A to demethylsterigmatocystin. The Baeyer-Villiger oxidas stcQ and the reductase stcR might be involved in the biosynthetic step from versicolorin A to demethylsterigmatocystin. The final step in the biosynthesis of sterigmatocystin is the methylation of demethylsterigmatocystin catalyzed by the methyltransferase stcP. The sequence is that of Cytochrome P450 monooxygenase stcF from Emericella nidulans (strain FGSC A4 / ATCC 38163 / CBS 112.46 / NRRL 194 / M139) (Aspergillus nidulans).